Here is a 446-residue protein sequence, read N- to C-terminus: Phosphoglucosamine mutase (446 aa).

S102 functions as the Phosphoserine intermediate in the catalytic mechanism. Residues S102, D239, D241, and D243 each coordinate Mg(2+). The residue at position 102 (S102) is a Phosphoserine.

Belongs to the phosphohexose mutase family. Mg(2+) is required as a cofactor. In terms of processing, activated by phosphorylation.

The enzyme catalyses alpha-D-glucosamine 1-phosphate = D-glucosamine 6-phosphate. Functionally, catalyzes the conversion of glucosamine-6-phosphate to glucosamine-1-phosphate. The polypeptide is Phosphoglucosamine mutase (Solibacter usitatus (strain Ellin6076)).